The sequence spans 652 residues: Proline-rich receptor-like protein kinase PERK1 (652 aa).

The segment at 1 to 137 (MSTAPSPGTT…PPSDSSDGLS (137 aa)) is disordered. Residues 1–139 (MSTAPSPGTT…SDSSDGLSTG (139 aa)) are Extracellular-facing. The span at 8-19 (GTTPSPSPPSPP) shows a compositional bias: pro residues. 2 N-linked (GlcNAc...) asparagine glycosylation sites follow: Asn21 and Asn50. A compositionally biased stretch (pro residues) spans 26-112 (TPPPAASSPP…PSPNQGPPNT (87 aa)). The span at 113–137 (PSGSTPRTPSNTKPSPPSDSSDGLS) shows a compositional bias: low complexity. A helical transmembrane segment spans residues 140 to 160 (VVVGIAIGGVAILVILTLICL). Residues 161–652 (LCKKKRRRRH…TGQGYSGPSL (492 aa)) are Cytoplasmic-facing. Residues 169 to 251 (RHDDEAAYYV…GGSDYSDLPV (83 aa)) form a disordered region. Residues 203-213 (NASRPSDNHVV) are compositionally biased toward polar residues. The span at 216 to 236 (LPPPKPPSPPRKPPPPPPPPA) shows a compositional bias: pro residues. A Phosphothreonine modification is found at Thr269. The region spanning 280-559 (FSEANLLGQG…VRALEGNVSL (280 aa)) is the Protein kinase domain. Residues 286–294 (LGQGGFGYV) and Lys308 contribute to the ATP site. Tyr353 is subject to Phosphotyrosine. The active-site Proton acceptor is the Asp404. A phosphoserine mark is found at Ser408 and Ser437. Phosphothreonine is present on residues Thr438 and Thr443. Tyr451 is modified (phosphotyrosine). The span at 605 to 616 (YGTTGEYSNPTS) shows a compositional bias: polar residues. Residues 605–652 (YGTTGEYSNPTSDYGLYPSGSSSEGQATREMEMGKIKKTGQGYSGPSL) are disordered.

It belongs to the protein kinase superfamily. Ser/Thr protein kinase family. As to expression, mostly expressed in inflorescence bolt, flower buds and siliques, and, to a lower extent, in roots, seedlings and leaves.

It localises to the cell membrane. The catalysed reaction is L-seryl-[protein] + ATP = O-phospho-L-seryl-[protein] + ADP + H(+). The enzyme catalyses L-threonyl-[protein] + ATP = O-phospho-L-threonyl-[protein] + ADP + H(+). This is Proline-rich receptor-like protein kinase PERK1 (PERK1) from Arabidopsis thaliana (Mouse-ear cress).